Reading from the N-terminus, the 791-residue chain is Putative DNA (cytosine-5)-methyltransferase CMT1 (791 aa).

A disordered region spans residues 37-59 (YQSKKTKLQAPTKKPANKGGKKE). One can recognise a BAH domain in the interval 79–199 (VLINLNDDVY…VPYLNFTSAD (121 aa)). In terms of domain architecture, SAM-dependent MTase C5-type spans 225–768 (KFLLDLYSGC…YAFGMASQGL (544 aa)). The stretch at 308 to 333 (VESISELEDEEVEENDDIDEASTGAE) forms a coiled coil. The 66-residue stretch at 339-404 (FEVEKFLGIM…DGFKSHLLPL (66 aa)) folds into the Chromo domain. Cys417 is an active-site residue.

This sequence belongs to the class I-like SAM-binding methyltransferase superfamily. C5-methyltransferase family. Expressed in flowers. Not detected in leaves, roots, seedlings and plants prior formation of flower buds.

Its subcellular location is the nucleus. The enzyme catalyses a 2'-deoxycytidine in DNA + S-adenosyl-L-methionine = a 5-methyl-2'-deoxycytidine in DNA + S-adenosyl-L-homocysteine + H(+). Functionally, may be involved in the CpXpG methylation and in gene silencing. This Arabidopsis thaliana (Mouse-ear cress) protein is Putative DNA (cytosine-5)-methyltransferase CMT1 (CMT1).